The following is a 417-amino-acid chain: Serine hydroxymethyltransferase (417 aa).

Residues Leu121 and Gly125–Leu127 contribute to the (6S)-5,6,7,8-tetrahydrofolate site. Lys229 carries the N6-(pyridoxal phosphate)lysine modification. Residue Ser355–Phe357 coordinates (6S)-5,6,7,8-tetrahydrofolate.

Belongs to the SHMT family. Homodimer. The cofactor is pyridoxal 5'-phosphate.

It is found in the cytoplasm. The catalysed reaction is (6R)-5,10-methylene-5,6,7,8-tetrahydrofolate + glycine + H2O = (6S)-5,6,7,8-tetrahydrofolate + L-serine. It functions in the pathway one-carbon metabolism; tetrahydrofolate interconversion. The protein operates within amino-acid biosynthesis; glycine biosynthesis; glycine from L-serine: step 1/1. Its function is as follows. Catalyzes the reversible interconversion of serine and glycine with tetrahydrofolate (THF) serving as the one-carbon carrier. This reaction serves as the major source of one-carbon groups required for the biosynthesis of purines, thymidylate, methionine, and other important biomolecules. Also exhibits THF-independent aldolase activity toward beta-hydroxyamino acids, producing glycine and aldehydes, via a retro-aldol mechanism. The protein is Serine hydroxymethyltransferase of Shewanella sp. (strain MR-4).